We begin with the raw amino-acid sequence, 148 residues long: uncharacterized protein (148 aa).

The interval Lys55–Pro148 is disordered. A compositionally biased stretch (polar residues) spans Arg68 to Glu104.

This is an uncharacterized protein from Homo sapiens (Human).